The chain runs to 293 residues: Protease HtpX (293 aa).

A run of 2 helical transmembrane segments spans residues 4 to 24 (IALFLLTNLGVMVVFGLILSL) and 32 to 52 (VMGLMIMAGLFGFGGAFVSLL). His-139 contacts Zn(2+). The active site involves Glu-140. His-143 serves as a coordination point for Zn(2+). 2 helical membrane-spanning segments follow: residues 158–178 (IVNTFVIFISRILAQLAAGFM) and 193–213 (MVYFVVSMVLELVFGIVASTI). Glu-222 contacts Zn(2+).

The protein belongs to the peptidase M48B family. It depends on Zn(2+) as a cofactor.

It localises to the cell inner membrane. This chain is Protease HtpX, found in Erwinia tasmaniensis (strain DSM 17950 / CFBP 7177 / CIP 109463 / NCPPB 4357 / Et1/99).